A 500-amino-acid polypeptide reads, in one-letter code: ATP synthase subunit alpha (500 aa).

169–176 (GDRQTGKT) provides a ligand contact to ATP.

It belongs to the ATPase alpha/beta chains family. As to quaternary structure, F-type ATPases have 2 components, CF(1) - the catalytic core - and CF(0) - the membrane proton channel. CF(1) has five subunits: alpha(3), beta(3), gamma(1), delta(1), epsilon(1). CF(0) has three main subunits: a(1), b(2) and c(9-12). The alpha and beta chains form an alternating ring which encloses part of the gamma chain. CF(1) is attached to CF(0) by a central stalk formed by the gamma and epsilon chains, while a peripheral stalk is formed by the delta and b chains.

The protein resides in the cell membrane. The catalysed reaction is ATP + H2O + 4 H(+)(in) = ADP + phosphate + 5 H(+)(out). Produces ATP from ADP in the presence of a proton gradient across the membrane. The alpha chain is a regulatory subunit. The chain is ATP synthase subunit alpha from Lactococcus lactis subsp. lactis (strain IL1403) (Streptococcus lactis).